The chain runs to 339 residues: Glycerol-3-phosphate dehydrogenase [NAD(P)+] (339 aa).

Residues Ser-11, Trp-12, and Lys-109 each coordinate NADPH. Lys-109, Gly-140, and Ser-142 together coordinate sn-glycerol 3-phosphate. Ala-144 contacts NADPH. Sn-glycerol 3-phosphate contacts are provided by Lys-195, Asp-249, Ser-259, Arg-260, and Asn-261. Lys-195 acts as the Proton acceptor in catalysis. Arg-260 is an NADPH binding site. NADPH contacts are provided by Val-284 and Glu-286.

It belongs to the NAD-dependent glycerol-3-phosphate dehydrogenase family.

It is found in the cytoplasm. It carries out the reaction sn-glycerol 3-phosphate + NAD(+) = dihydroxyacetone phosphate + NADH + H(+). The enzyme catalyses sn-glycerol 3-phosphate + NADP(+) = dihydroxyacetone phosphate + NADPH + H(+). It participates in membrane lipid metabolism; glycerophospholipid metabolism. Its function is as follows. Catalyzes the reduction of the glycolytic intermediate dihydroxyacetone phosphate (DHAP) to sn-glycerol 3-phosphate (G3P), the key precursor for phospholipid synthesis. The protein is Glycerol-3-phosphate dehydrogenase [NAD(P)+] of Lactobacillus helveticus (strain DPC 4571).